A 385-amino-acid polypeptide reads, in one-letter code: Odorant receptor 47a (385 aa).

Over 1–33 the chain is Cytoplasmic; it reads MDSFLQVQKSTIALLGFDLFSENREMWKRPYRA. The helical transmembrane segment at 34-54 threads the bilayer; sequence MNVFSIAAIFPFILAAVLHNW. Over 55–62 the chain is Extracellular; it reads KNVLLLAD. Residues 63–83 form a helical membrane-spanning segment; it reads AMVALLITILGLFKFSMILYL. The Cytoplasmic portion of the chain corresponds to 84-129; it reads RRDFKRLIDKFRLLMSNEAEQGEEYAEILNAANKQDQRMCTLFRTC. A helical membrane pass occupies residues 130-150; sequence FLLAWALNSVLPLVRMGLSYW. At 151–175 the chain is on the extracellular side; sequence LAGHAEPELPFPCLFPWNIHIIRNY. A helical membrane pass occupies residues 176 to 196; sequence VLSFIWSAFASTGVVLPAVSL. The Cytoplasmic segment spans residues 197–255; that stretch reads DTIFCSFTSNLCAFFKIAQYKVVRFKGGSLKESQATLNKVFALYQTSLDMCNDLNQCYQ. A helical membrane pass occupies residues 256–276; sequence PIICAQFFISSLQLCMLGYLF. Residues 277-284 lie on the Extracellular side of the membrane; it reads SITFAQTE. The chain crosses the membrane as a helical span at residues 285 to 305; that stretch reads GVYYASFIATIIIQAYIYCYC. At 306–357 the chain is on the cytoplasmic side; it reads GENLKTESASFEWAIYDSPWHESLGAGGASTSICRSLLISMMRAHRGFRITG. A helical membrane pass occupies residues 358 to 378; sequence YFFEANMEAFSSIVRTAMSYI. Residues 379–385 lie on the Extracellular side of the membrane; that stretch reads TMLRSFS.

It belongs to the insect chemoreceptor superfamily. Heteromeric odorant receptor channel (TC 1.A.69) family. Or1a subfamily. As to quaternary structure, interacts with Orco. Complexes exist early in the endomembrane system in olfactory sensory neurons (OSNs), coupling these complexes to the conserved ciliary trafficking pathway. Expressed with Orco in 40 olfactory receptor neurons in a broad area across the antenna, including both anterior and posterior faces. This expression pattern matches the distribution of the small sensilla basiconica. Expression in the antenna is observed late in antennal development at 93 hours APF.

It localises to the cell membrane. Odorant receptor which mediates acceptance or avoidance behavior, depending on its substrates. The odorant receptor repertoire encodes a large collection of odor stimuli that vary widely in identity, intensity, and duration. Complexes with Orco to form odorant-sensing units, providing sensitive and prolonged odorant signaling and calcium permeability. They are necessary and sufficient to promote functional reconstitution of odor-evoked signaling in sensory neurons that normally respond only to carbon dioxide. Involved in the behavioral responses to esters. Involved in the behavioral responses to pentyl acetate. The protein is Odorant receptor 47a (Or47a) of Drosophila melanogaster (Fruit fly).